The primary structure comprises 325 residues: Lipoyl synthase (325 aa).

The segment at 1–31 (MASDSDLLDTKPAETRHPEKAHRPDQPTLRK) is disordered. Basic and acidic residues predominate over residues 8–31 (LDTKPAETRHPEKAHRPDQPTLRK). The [4Fe-4S] cluster site is built by Cys-61, Cys-66, Cys-72, Cys-87, Cys-91, Cys-94, and Ser-300. One can recognise a Radical SAM core domain in the interval 73–289 (WAKKHATFMI…AEIGRAKGFL (217 aa)).

The protein belongs to the radical SAM superfamily. Lipoyl synthase family. Requires [4Fe-4S] cluster as cofactor.

It localises to the cytoplasm. It carries out the reaction [[Fe-S] cluster scaffold protein carrying a second [4Fe-4S](2+) cluster] + N(6)-octanoyl-L-lysyl-[protein] + 2 oxidized [2Fe-2S]-[ferredoxin] + 2 S-adenosyl-L-methionine + 4 H(+) = [[Fe-S] cluster scaffold protein] + N(6)-[(R)-dihydrolipoyl]-L-lysyl-[protein] + 4 Fe(3+) + 2 hydrogen sulfide + 2 5'-deoxyadenosine + 2 L-methionine + 2 reduced [2Fe-2S]-[ferredoxin]. It participates in protein modification; protein lipoylation via endogenous pathway; protein N(6)-(lipoyl)lysine from octanoyl-[acyl-carrier-protein]: step 2/2. In terms of biological role, catalyzes the radical-mediated insertion of two sulfur atoms into the C-6 and C-8 positions of the octanoyl moiety bound to the lipoyl domains of lipoate-dependent enzymes, thereby converting the octanoylated domains into lipoylated derivatives. This Methylocella silvestris (strain DSM 15510 / CIP 108128 / LMG 27833 / NCIMB 13906 / BL2) protein is Lipoyl synthase.